Here is a 174-residue protein sequence, read N- to C-terminus: Secretory-abundant heat soluble protein 2 (174 aa).

The signal sequence occupies residues 1 to 19 (MHRFVLALVVFAGAAIVWA). The SAHS-c1 stretch occupies residues 30-60 (EWTGKPWMGKWESDPSKDENVEEFKKKLQLP). An SAHS-c2 region spans residues 77 to 105 (YKKGDEYHHKIIINDAHYKNDIVFKLGQE). The N-linked (GlcNAc...) asparagine glycan is linked to N111. Residues 118-172 (KYEDKDGALVGSVHYTGTKEQSLDKTINNVFKLEGDHLVKTSTIEGVTMKRHYNK) form an SAHS-c3 region.

The protein belongs to the Secretory-abundant heat soluble protein (SAHS) family.

The protein resides in the secreted. Functionally, secreted heat soluble protein acting as a molecular shield in water-deficient condition. Tardigrade-specific intrinsically disordered proteins (TDPs) are essential for desiccation tolerance by forming non-crystalline amorphous solids upon desiccation, and this vitrified state mirrors their protective capabilities. The polypeptide is Secretory-abundant heat soluble protein 2 (Ramazzottius varieornatus (Water bear)).